The primary structure comprises 270 residues: Small ribosomal subunit protein uS3 (270 aa).

The KH type-2 domain maps to 38–106 (IRQMLTRGME…QVQLNILEVK (69 aa)). The tract at residues 212-270 (EREAAQAAQRAAGPQRRERPGRRRRGGGGGGGQQQQQAEKATAQATEAAKAAKSGNEGS) is disordered. Low complexity-rich tracts occupy residues 216–225 (AQAAQRAAGP) and 245–263 (QQQQAEKATAQATEAAKAA).

This sequence belongs to the universal ribosomal protein uS3 family. As to quaternary structure, part of the 30S ribosomal subunit. Forms a tight complex with proteins S10 and S14.

In terms of biological role, binds the lower part of the 30S subunit head. Binds mRNA in the 70S ribosome, positioning it for translation. The chain is Small ribosomal subunit protein uS3 from Thermobifida fusca (strain YX).